The sequence spans 156 residues: Fibroblast growth factor 2 (156 aa).

Residues 1–9 (MAAGSITTL) constitute a propeptide that is removed on maturation. Asn-37 is a heparin binding site. A Phosphotyrosine; by TEC modification is found at Tyr-83. Lys-96 participates in a covalent cross-link: Glycyl lysine isopeptide (Lys-Gly) (interchain with G-Cter in SUMO1). Residues 129–145 (KRTGQYKLGSKTGPGQK) are heparin-binding.

Belongs to the heparin-binding growth factors family. In terms of assembly, monomer. Homodimer. Interacts with FGFR1, FGFR2, FGFR3 and FGFR4. Affinity between fibroblast growth factors (FGFs) and their receptors is increased by heparan sulfate glycosaminoglycans that function as coreceptors. Interacts with CSPG4, FGFBP1 and TEC. Found in a complex with FGFBP1, FGF1 and FGF2. Interacts with FGFBP3. Interacts with integrin ITGAV:ITGB3; the interaction is required for FGF2 signaling. Interacts with SNORC (via the extracellular domain). Interacts with glypican GPC3. In terms of processing, phosphorylation at Tyr-83 regulates FGF2 unconventional secretion.

It is found in the secreted. Its subcellular location is the nucleus. Functionally, acts as a ligand for FGFR1, FGFR2, FGFR3 and FGFR4. Also acts as an integrin ligand which is required for FGF2 signaling. Binds to integrin ITGAV:ITGB3. Plays an important role in the regulation of cell survival, cell division, cell differentiation and cell migration. Functions as a potent mitogen in vitro. Can induce angiogenesis. Mediates phosphorylation of ERK1/2 and thereby promotes retinal lens fiber differentiation. The protein is Fibroblast growth factor 2 (FGF2) of Monodelphis domestica (Gray short-tailed opossum).